A 159-amino-acid chain; its full sequence is 6,7-dimethyl-8-ribityllumazine synthase (159 aa).

5-amino-6-(D-ribitylamino)uracil contacts are provided by residues F22, 57 to 59 (AVE), and 81 to 83 (AVI). A (2S)-2-hydroxy-3-oxobutyl phosphate-binding site is contributed by 86 to 87 (GT). The Proton donor role is filled by H89. A 5-amino-6-(D-ribitylamino)uracil-binding site is contributed by F114. R128 contributes to the (2S)-2-hydroxy-3-oxobutyl phosphate binding site.

It belongs to the DMRL synthase family. As to quaternary structure, forms an icosahedral capsid composed of 60 subunits, arranged as a dodecamer of pentamers.

The catalysed reaction is (2S)-2-hydroxy-3-oxobutyl phosphate + 5-amino-6-(D-ribitylamino)uracil = 6,7-dimethyl-8-(1-D-ribityl)lumazine + phosphate + 2 H2O + H(+). The protein operates within cofactor biosynthesis; riboflavin biosynthesis; riboflavin from 2-hydroxy-3-oxobutyl phosphate and 5-amino-6-(D-ribitylamino)uracil: step 1/2. Its function is as follows. Catalyzes the formation of 6,7-dimethyl-8-ribityllumazine by condensation of 5-amino-6-(D-ribitylamino)uracil with 3,4-dihydroxy-2-butanone 4-phosphate. This is the penultimate step in the biosynthesis of riboflavin. This chain is 6,7-dimethyl-8-ribityllumazine synthase, found in Shewanella denitrificans (strain OS217 / ATCC BAA-1090 / DSM 15013).